Here is a 57-residue protein sequence, read N- to C-terminus: Ribosome modulation factor (57 aa).

Residues 1 to 28 (MKRQKRDRLERAQSQGYKAGLNGRSHDE) are disordered.

This sequence belongs to the ribosome modulation factor family.

The protein resides in the cytoplasm. Its function is as follows. During stationary phase, converts 70S ribosomes to an inactive dimeric form (100S ribosomes). The sequence is that of Ribosome modulation factor from Vibrio cholerae serotype O1 (strain MJ-1236).